The chain runs to 363 residues: Aminomethyltransferase (363 aa).

The protein belongs to the GcvT family. In terms of assembly, the glycine cleavage system is composed of four proteins: P, T, L and H.

It catalyses the reaction N(6)-[(R)-S(8)-aminomethyldihydrolipoyl]-L-lysyl-[protein] + (6S)-5,6,7,8-tetrahydrofolate = N(6)-[(R)-dihydrolipoyl]-L-lysyl-[protein] + (6R)-5,10-methylene-5,6,7,8-tetrahydrofolate + NH4(+). Its function is as follows. The glycine cleavage system catalyzes the degradation of glycine. This chain is Aminomethyltransferase, found in Staphylococcus aureus (strain bovine RF122 / ET3-1).